The chain runs to 87 residues: Precursor of CEP8 (87 aa).

Residues Met1–Ala29 form the signal peptide. The propeptide occupies Arg30–Asp72. An N-linked (GlcNAc...) asparagine glycan is attached at Asn41. The disordered stretch occupies residues Asn41 to His87. A compositionally biased stretch (gly residues) spans Gly49–Ser59. Residues Asp63–Arg75 show a composition bias toward basic and acidic residues. 3 positions are modified to hydroxyproline: Pro76, Pro79, and Pro83.

This sequence belongs to the C-terminally encoded plant signaling peptide (CEP) family. Interacts with CEP receptors (e.g. CEPR1 and CEPR2). In terms of processing, the mature small signaling peptide is generated by proteolytic processing of the longer precursor. As to expression, expressed in lateral root primordia and in lateral roots excluding the meristem region. Also present in the aerial tissues, such as leaf petioles and the shoot apex region.

The protein localises to the secreted. It localises to the extracellular space. It is found in the apoplast. Extracellular signaling peptide that may regulate primary root growth rate and systemic nitrogen (N)-demand signaling. Mediates up-regulation of genes involved in N uptake and assimilation pathways. This is Precursor of CEP8 from Arabidopsis thaliana (Mouse-ear cress).